The primary structure comprises 225 residues: MTYKKLHEWDLSPEEAMKIQNVLREKILFKPFEGEPKYVAGVDLSFPKREEGLAVIVVMEYPTFKIVELVSERGKVDFPYIPGLLAFREGPLFLKAWEKLKTKPDVVVFDGQGIAHPRKLGIASHMGLFIEIPTIGVAKSRLYGTYREPENRRCSWSYLYDNEEIIGCVMRTREGSAPIFVSPGHLIDVESSIRLVKSFTLPGRRLPEPTRMAHIYTQRLKKGLF.

Mg(2+)-binding residues include Asp43 and Asp110.

Belongs to the endonuclease V family. Mg(2+) is required as a cofactor.

Its subcellular location is the cytoplasm. It carries out the reaction Endonucleolytic cleavage at apurinic or apyrimidinic sites to products with a 5'-phosphate.. In terms of biological role, DNA repair enzyme involved in the repair of deaminated bases. Selectively cleaves double-stranded DNA at the second phosphodiester bond 3' to a deoxyinosine leaving behind the intact lesion on the nicked DNA. In Thermotoga neapolitana (strain ATCC 49049 / DSM 4359 / NBRC 107923 / NS-E), this protein is Endonuclease V.